The sequence spans 92 residues: Small ribosomal subunit protein bS20 (92 aa).

Disordered regions lie at residues 1-25 (MALR…NRAK) and 68-92 (HKNA…AQQA). Residues 80–92 (AKAINKAKAAQQA) are compositionally biased toward low complexity.

It belongs to the bacterial ribosomal protein bS20 family.

In terms of biological role, binds directly to 16S ribosomal RNA. The chain is Small ribosomal subunit protein bS20 from Deinococcus radiodurans (strain ATCC 13939 / DSM 20539 / JCM 16871 / CCUG 27074 / LMG 4051 / NBRC 15346 / NCIMB 9279 / VKM B-1422 / R1).